The sequence spans 396 residues: Acetylornithine aminotransferase 2 (396 aa).

Pyridoxal 5'-phosphate-binding positions include glycine 102–alanine 103 and phenylalanine 134. Residue arginine 137 coordinates N(2)-acetyl-L-ornithine. Aspartate 219 to glutamine 222 serves as a coordination point for pyridoxal 5'-phosphate. Position 248 is an N6-(pyridoxal phosphate)lysine (lysine 248). Residue threonine 276 coordinates pyridoxal 5'-phosphate.

The protein belongs to the class-III pyridoxal-phosphate-dependent aminotransferase family. ArgD subfamily. As to quaternary structure, homodimer. It depends on pyridoxal 5'-phosphate as a cofactor.

Its subcellular location is the cytoplasm. The enzyme catalyses N(2)-acetyl-L-ornithine + 2-oxoglutarate = N-acetyl-L-glutamate 5-semialdehyde + L-glutamate. It functions in the pathway amino-acid biosynthesis; L-arginine biosynthesis; N(2)-acetyl-L-ornithine from L-glutamate: step 4/4. The protein is Acetylornithine aminotransferase 2 of Bordetella parapertussis (strain 12822 / ATCC BAA-587 / NCTC 13253).